We begin with the raw amino-acid sequence, 1162 residues long: Carbamoyl phosphate synthase large chain (1162 aa).

Residues 1–456 (MPKRTDIKSI…SLQKALRGLE (456 aa)) are carboxyphosphate synthetic domain. Residues Arg-129, Arg-222, Gly-228, Gly-229, Glu-261, Val-263, Glu-268, Gly-294, Val-295, His-296, Gln-338, and Glu-352 each coordinate ATP. Positions 186–381 (ETEWQLGEVE…IAKVAAKLAV (196 aa)) constitute an ATP-grasp 1 domain. Gln-338, Glu-352, and Asn-354 together coordinate Mg(2+). Gln-338, Glu-352, and Asn-354 together coordinate Mn(2+). The oligomerization domain stretch occupies residues 457-613 (TGLTGFDEIA…PFVGQPRSEA (157 aa)). The interval 614–1025 (EVSDRKKVVI…AFAKAQLGAG (412 aa)) is carbamoyl phosphate synthetic domain. The ATP-grasp 2 domain maps to 742-954 (QKLLIKLDLN…IAKVAARIMA (213 aa)). ATP contacts are provided by Arg-778, Thr-838, Leu-840, Glu-845, Gly-870, Ile-871, His-872, Ser-873, Gln-913, and Glu-925. Positions 913, 925, and 927 each coordinate Mg(2+). Mn(2+)-binding residues include Gln-913, Glu-925, and Asn-927. Residues 1026 to 1162 (VELPREGTVF…VRPLQDYFRS (137 aa)) form the MGS-like domain. Positions 1026–1162 (VELPREGTVF…VRPLQDYFRS (137 aa)) are allosteric domain.

The protein belongs to the CarB family. In terms of assembly, composed of two chains; the small (or glutamine) chain promotes the hydrolysis of glutamine to ammonia, which is used by the large (or ammonia) chain to synthesize carbamoyl phosphate. Tetramer of heterodimers (alpha,beta)4. Mg(2+) is required as a cofactor. It depends on Mn(2+) as a cofactor.

It carries out the reaction hydrogencarbonate + L-glutamine + 2 ATP + H2O = carbamoyl phosphate + L-glutamate + 2 ADP + phosphate + 2 H(+). The enzyme catalyses hydrogencarbonate + NH4(+) + 2 ATP = carbamoyl phosphate + 2 ADP + phosphate + 2 H(+). It participates in amino-acid biosynthesis; L-arginine biosynthesis; carbamoyl phosphate from bicarbonate: step 1/1. It functions in the pathway pyrimidine metabolism; UMP biosynthesis via de novo pathway; (S)-dihydroorotate from bicarbonate: step 1/3. Its function is as follows. Large subunit of the glutamine-dependent carbamoyl phosphate synthetase (CPSase). CPSase catalyzes the formation of carbamoyl phosphate from the ammonia moiety of glutamine, carbonate, and phosphate donated by ATP, constituting the first step of 2 biosynthetic pathways, one leading to arginine and/or urea and the other to pyrimidine nucleotides. The large subunit (synthetase) binds the substrates ammonia (free or transferred from glutamine from the small subunit), hydrogencarbonate and ATP and carries out an ATP-coupled ligase reaction, activating hydrogencarbonate by forming carboxy phosphate which reacts with ammonia to form carbamoyl phosphate. This Brucella suis biovar 1 (strain 1330) protein is Carbamoyl phosphate synthase large chain.